Reading from the N-terminus, the 185-residue chain is Large ribosomal subunit protein uL5 (185 aa).

It belongs to the universal ribosomal protein uL5 family. As to quaternary structure, part of the 50S ribosomal subunit; part of the 5S rRNA/L5/L18/L25 subcomplex. Contacts the 5S rRNA and the P site tRNA. Forms a bridge to the 30S subunit in the 70S ribosome.

This is one of the proteins that bind and probably mediate the attachment of the 5S RNA into the large ribosomal subunit, where it forms part of the central protuberance. In the 70S ribosome it contacts protein S13 of the 30S subunit (bridge B1b), connecting the 2 subunits; this bridge is implicated in subunit movement. Contacts the P site tRNA; the 5S rRNA and some of its associated proteins might help stabilize positioning of ribosome-bound tRNAs. The protein is Large ribosomal subunit protein uL5 of Nitrobacter hamburgensis (strain DSM 10229 / NCIMB 13809 / X14).